We begin with the raw amino-acid sequence, 164 residues long: UPF0305 protein MJ0646 (164 aa).

Belongs to the UPF0305 family.

This is UPF0305 protein MJ0646 from Methanocaldococcus jannaschii (strain ATCC 43067 / DSM 2661 / JAL-1 / JCM 10045 / NBRC 100440) (Methanococcus jannaschii).